We begin with the raw amino-acid sequence, 400 residues long: Acetate kinase (400 aa).

Asn-9 provides a ligand contact to Mg(2+). Lys-16 serves as a coordination point for ATP. Arg-90 serves as a coordination point for substrate. Asp-147 functions as the Proton donor/acceptor in the catalytic mechanism. Residues 207 to 211 (HIGNG), 282 to 284 (DLR), and 330 to 334 (GIGEN) each bind ATP. Glu-385 is a Mg(2+) binding site.

This sequence belongs to the acetokinase family. Homodimer. Requires Mg(2+) as cofactor. Mn(2+) is required as a cofactor.

Its subcellular location is the cytoplasm. It carries out the reaction acetate + ATP = acetyl phosphate + ADP. The protein operates within metabolic intermediate biosynthesis; acetyl-CoA biosynthesis; acetyl-CoA from acetate: step 1/2. In terms of biological role, catalyzes the formation of acetyl phosphate from acetate and ATP. Can also catalyze the reverse reaction. The protein is Acetate kinase of Staphylococcus aureus (strain USA300).